The chain runs to 680 residues: Probable Xaa-Pro aminopeptidase P (680 aa).

Positions 477, 488, 586, and 600 each coordinate Mn(2+).

The protein belongs to the peptidase M24B family. Mn(2+) serves as cofactor.

The catalysed reaction is Release of any N-terminal amino acid, including proline, that is linked to proline, even from a dipeptide or tripeptide.. In terms of biological role, catalyzes the removal of a penultimate prolyl residue from the N-termini of peptides. The protein is Probable Xaa-Pro aminopeptidase P (AMPP) of Podospora anserina (strain S / ATCC MYA-4624 / DSM 980 / FGSC 10383) (Pleurage anserina).